We begin with the raw amino-acid sequence, 375 residues long: Alpha-2,8-sialyltransferase 8B (375 aa).

The Cytoplasmic segment spans residues 1–6 (MQLQFR). A helical; Signal-anchor for type II membrane protein membrane pass occupies residues 7–23 (SWMLAALTLLVVFLIFA). Residues 24 to 375 (DISEIEEEIG…LTVGQCDGAT (352 aa)) are Lumenal-facing. N-linked (GlcNAc...) asparagine glycans are attached at residues N60, N72, N89, and N134. 2 disulfides stabilise this stretch: C157–C307 and C171–C371. 2 residues coordinate CMP-N-acetyl-beta-neuraminate: N162 and N185. N219 and N234 each carry an N-linked (GlcNAc...) asparagine glycan. Residues T294, T295, G296, W316, Y329, and H330 each coordinate CMP-N-acetyl-beta-neuraminate. H346 functions as the Proton donor/acceptor in the catalytic mechanism.

It belongs to the glycosyltransferase 29 family. In terms of processing, autopolysialylated. Autopolysialylation is not a prerequisite for the polysialylation acitity, but enhances the polysialylation acitity.

The protein localises to the golgi apparatus membrane. The protein resides in the secreted. It is found in the cell membrane. The enzyme catalyses [N-acetyl-alpha-D-neuraminosyl-(2-&gt;8)](n) + CMP-N-acetyl-beta-neuraminate = [N-acetyl-alpha-D-neuraminosyl-(2-&gt;8)](n+1) + CMP + H(+). The protein operates within protein modification; protein glycosylation. Catalyzes the transfer of a sialic acid from a CMP-linked sialic acid donor onto a terminal alpha-2,3-, alpha-2,6-, or alpha-2,8-linked sialic acid of an N-linked glycan acceptor through alpha-2,8-linkages. Therefore, participates in polysialic acid synthesis on various sialylated N-acetyllactosaminyl oligosaccharides (alpha-2,3-, alpha-2,6-, or alpha-2,8-linked sialic acid), including NCAM1, NCAM1 N-glycans, FETUB N-glycans, and to a lesser extent sialylparagloboside (SPG) and AHSG, which does not require the initial addition of an alpha 2,8-sialic acid. However, does not exhibit sialic acid-polymerase activity. Catalyzes polysialic acid synthesis in the hippocampal on NCAM1 and supports neurite outgrowth. ST8SIA2-mediated polysialylation influences on oligodendrocyte differentiation and may promote the integrity of myelin and axons. The sequence is that of Alpha-2,8-sialyltransferase 8B from Mus musculus (Mouse).